The chain runs to 1520 residues: Integrator complex subunit 3 homolog (1520 aa).

6 disordered regions span residues 1 to 23 (MMNQQQQQQQPPTTSPTQQQQLT), 523 to 671 (QLHS…NSRV), 689 to 801 (VISQ…SPST), 813 to 922 (DEPP…QNIK), 1116 to 1177 (FSNS…NITN), and 1489 to 1520 (QSSNIKNDNNPTLSKHQNSDDDSNPKKRFRKE). 2 stretches are compositionally biased toward low complexity: residues 527–549 (QQQQLQQQQLQQPQQPQQQQQPP) and 557–595 (QPINKQLPLQMSPQQQSQQQLQQQQLQQQLQQQQQQQQP). The span at 596–612 (PQQPPPQQQPQQQPPQQ) shows a compositional bias: pro residues. A compositionally biased stretch (low complexity) spans 613-625 (QPQQQPQQQQPQL). Over residues 626 to 639 (NISTGNLPNIQQPM) the composition is skewed to polar residues. 3 stretches are compositionally biased toward low complexity: residues 642-669 (SPPLSSNTLVSPTSSSSPTSSNLPTNNS), 694-717 (PQSQQTPSLHSSSQSVLQQKSPPL), and 725-735 (QQQPSQQLPSQ). Residues 736–752 (IVKNSPPNLSMTNENIS) show a composition bias toward polar residues. Residues 768-789 (SPLINSSNSNITTPNPDSQSQI) show a composition bias toward low complexity. Polar residues predominate over residues 819-828 (SKSSPTQSNI). The segment covering 837–882 (PPQTTISSSSPLLQPQTQPQPQTQPQPQTLQQSTTPSLSSSSTPTI) has biased composition (low complexity). Residues 898–918 (QPPPPPPSSQPLQPPPPPPPS) show a composition bias toward pro residues. Low complexity-rich tracts occupy residues 1116-1130 (FSNSDDNESTNNNNN) and 1137-1177 (QQQQ…NITN). Residues 1489 to 1504 (QSSNIKNDNNPTLSKH) show a composition bias toward polar residues.

Belongs to the Integrator subunit 3 family. As to quaternary structure, component of the Integrator complex. The core complex associates with protein phosphatase 2A subunits, to form the Integrator-PP2A (INTAC) complex. Component of the SOSS complex.

It is found in the nucleus. The protein resides in the cytoplasm. Its function is as follows. Component of the integrator complex, a multiprotein complex that terminates RNA polymerase II (Pol II) transcription in the promoter-proximal region of genes. The integrator complex provides a quality checkpoint during transcription elongation by driving premature transcription termination of transcripts that are unfavorably configured for transcriptional elongation: the complex terminates transcription by (1) catalyzing dephosphorylation of the C-terminal domain (CTD) of Pol II subunit polr2a, (2) degrading the exiting nascent RNA transcript via endonuclease activity and (3) promoting the release of Pol II from bound DNA. The integrator complex is also involved in terminating the synthesis of non-coding Pol II transcripts, such as enhancer RNAs (eRNAs), small nuclear RNAs (snRNAs), telomerase RNAs and long non-coding RNAs (lncRNAs). Functionally, component of the SOSS complex, a multiprotein complex that functions downstream of the MRN complex to promote DNA repair and G2/M checkpoint. The SOSS complex associates with single-stranded DNA at DNA lesions and influences diverse endpoints in the cellular DNA damage response including cell-cycle checkpoint activation, recombinational repair and maintenance of genomic stability. The SOSS complex is required for efficient homologous recombination-dependent repair of double-strand breaks (DSBs) and ATM-dependent signaling pathways. In the SOSS complex, it is required for the assembly of the complex and for stabilization of the complex at DNA damage sites. The chain is Integrator complex subunit 3 homolog (ints3) from Dictyostelium discoideum (Social amoeba).